Consider the following 509-residue polypeptide: MVRTAVLILLLVRFSEPAEHCNAQMNSGPWRIKNLSIAPPKETLQKDVEIEIVETNMDENVIIGYKGYYQAYAYNGGSLDPNTRIEETMETLNVAKEDLLMWSIRRQCEVGEELIDQWGSDSDNCFRNKDGRGVWVFGKELVKRQNNNHFARHTCNRSWRCGVSTAKMYTRLECDNDNDECKVTILDINGASINVTENTVLHRDGVSMVLKQKSTFSRRPEKVACLLIKDDKSDPRSVTREHCLVDNDIFDLSKNTWLCKFNRCIKRKSENVVKQRPPTWRHDVSAKHDEGASATKGDLMHIQEELMYENDLLRMNLELMHAHINKLNNMLHNLIVSVAKVDERLIGNLMNNSVSSTFLSDDTFLLMPCTHPPPHTSNCYNNSIYKEGRWVANTDSSQCIDFNNYKELAIDDDIEFWIPTIGNTTYHENWKDASGWSFIAQQKSNLISTMENTKFGGHTTSLSDITDMAKGELNAKLWSFMLGHAFSFMLTVGVIIFLFCMVRNRSRAY.

The first 17 residues, 1-17, serve as a signal peptide directing secretion; sequence MVRTAVLILLLVRFSEP. N-linked (GlcNAc...) asparagine; by host glycosylation is found at Asn34, Asn156, Asn194, Asn351, Asn381, and Asn423. Ser479 is lipidated: O-palmitoyl serine; by host. A helical transmembrane segment spans residues 480–502; the sequence is FMLGHAFSFMLTVGVIIFLFCMV. An N-linked (GlcNAc...) asparagine; by host glycan is attached at Asn504.

Belongs to the baculoviridae gp64 family. Post-translationally, palmitoylated.

The protein resides in the virion membrane. Its subcellular location is the host cell membrane. Its function is as follows. Envelope phosphoglycoprotein which mediates the fusion of viral and host endosomal membranes leading to virus entry into the host cell. The polypeptide is Major envelope glycoprotein (GP67) (Choristoneura fumiferana nuclear polyhedrosis virus (CfMNPV)).